The following is a 660-amino-acid chain: Bifunctional polymyxin resistance protein ArnA (660 aa).

Residues 1–304 (MKTVVFAYHD…MLGLVQGSRL (304 aa)) are formyltransferase ArnAFT. 86–88 (HLI) serves as a coordination point for (6R)-10-formyltetrahydrofolate. H104 acts as the Proton donor; for formyltransferase activity in catalysis. Residues R114 and 136–140 (VKRAD) contribute to the (6R)-10-formyltetrahydrofolate site. Residues 314–660 (RRTRVLILGV…RTVDLTDKPS (347 aa)) form a dehydrogenase ArnADH region. NAD(+)-binding positions include D347 and 368–369 (DI). Residues A393, Y398, and 432-433 (TS) each bind UDP-alpha-D-glucuronate. Residue E434 is the Proton acceptor; for decarboxylase activity of the active site. UDP-alpha-D-glucuronate contacts are provided by residues R460, N492, 526-535 (KLIDGGKQKR), and Y613. The active-site Proton donor; for decarboxylase activity is the R619.

The protein in the N-terminal section; belongs to the Fmt family. UDP-L-Ara4N formyltransferase subfamily. This sequence in the C-terminal section; belongs to the NAD(P)-dependent epimerase/dehydratase family. UDP-glucuronic acid decarboxylase subfamily. Homohexamer, formed by a dimer of trimers.

The enzyme catalyses UDP-alpha-D-glucuronate + NAD(+) = UDP-beta-L-threo-pentopyranos-4-ulose + CO2 + NADH. The catalysed reaction is UDP-4-amino-4-deoxy-beta-L-arabinose + (6R)-10-formyltetrahydrofolate = UDP-4-deoxy-4-formamido-beta-L-arabinose + (6S)-5,6,7,8-tetrahydrofolate + H(+). The protein operates within nucleotide-sugar biosynthesis; UDP-4-deoxy-4-formamido-beta-L-arabinose biosynthesis; UDP-4-deoxy-4-formamido-beta-L-arabinose from UDP-alpha-D-glucuronate: step 1/3. It participates in nucleotide-sugar biosynthesis; UDP-4-deoxy-4-formamido-beta-L-arabinose biosynthesis; UDP-4-deoxy-4-formamido-beta-L-arabinose from UDP-alpha-D-glucuronate: step 3/3. It functions in the pathway bacterial outer membrane biogenesis; lipopolysaccharide biosynthesis. In terms of biological role, bifunctional enzyme that catalyzes the oxidative decarboxylation of UDP-glucuronic acid (UDP-GlcUA) to UDP-4-keto-arabinose (UDP-Ara4O) and the addition of a formyl group to UDP-4-amino-4-deoxy-L-arabinose (UDP-L-Ara4N) to form UDP-L-4-formamido-arabinose (UDP-L-Ara4FN). The modified arabinose is attached to lipid A and is required for resistance to polymyxin and cationic antimicrobial peptides. The polypeptide is Bifunctional polymyxin resistance protein ArnA (Shigella sonnei (strain Ss046)).